Consider the following 71-residue polypeptide: Small ribosomal subunit protein bS21 (71 aa).

The protein belongs to the bacterial ribosomal protein bS21 family.

The protein is Small ribosomal subunit protein bS21 of Buchnera aphidicola subsp. Schizaphis graminum (strain Sg).